The chain runs to 457 residues: Aromatic amino acid transport protein AroP (457 aa).

The Cytoplasmic segment spans residues 1–18; sequence MMEGQQHGEQLKRGLKNR. The helical transmembrane segment at 19–39 threads the bilayer; that stretch reads HIQLIALGGAIGTGLFLGSAS. The Periplasmic portion of the chain corresponds to 40–42; it reads VIQ. A helical membrane pass occupies residues 43 to 63; sequence SAGPGIILGYAIAGFIAFLIM. Residues 64–98 lie on the Cytoplasmic side of the membrane; that stretch reads RQLGEMVVEEPVAGSFSHFAYKYWGSFAGFASGWN. Residues 99–119 traverse the membrane as a helical segment; that stretch reads YWVLYVLVAMAELTAVGKYIQ. Residues 120-124 lie on the Periplasmic side of the membrane; the sequence is FWYPE. The helical transmembrane segment at 125–145 threads the bilayer; sequence IPTWVSAAVFFVVINAINLTN. At 146-147 the chain is on the cytoplasmic side; sequence VK. The helical transmembrane segment at 148 to 168 threads the bilayer; the sequence is VFGEMEFWFAIIKVIAVVAMI. Over 169 to 192 the chain is Periplasmic; it reads IFGGWLLFSGNGGPQATVSNLWDQ. Residues 193–213 form a helical membrane-spanning segment; it reads GGFLPHGFTGLVMMMAIIMFS. Over 214–239 the chain is Cytoplasmic; the sequence is FGGLELVGITAAEADNPEQSIPKATN. A helical transmembrane segment spans residues 240-260; it reads QVIYRILIFYIGSLAVLLSLM. At 261-279 the chain is on the periplasmic side; sequence PWTRVTADTSPFVLIFHEL. A helical transmembrane segment spans residues 280–300; it reads GDTFVANALNIVVLTAALSVY. Over 301-330 the chain is Cytoplasmic; it reads NSCVYCNSRMLFGLAQQGNAPKALASVDKR. A helical membrane pass occupies residues 331-351; sequence GVPVNTILVSALVTALCVLIN. Residues 352–359 are Periplasmic-facing; that stretch reads YLAPESAF. A helical membrane pass occupies residues 360-380; that stretch reads GLLMALVVSALVINWAMISLA. Residues 381–402 lie on the Cytoplasmic side of the membrane; that stretch reads HMKFRRAKQEQGVVTRFPALLY. A helical transmembrane segment spans residues 403 to 423; the sequence is PLGNWICLLFMAAVLVIMLMT. Topologically, residues 424–426 are periplasmic; the sequence is PGM. A helical membrane pass occupies residues 427 to 447; it reads AISVYLIPVWLIVLGIGYLFK. Residues 448 to 457 lie on the Cytoplasmic side of the membrane; that stretch reads EKTAKAVKAH.

Belongs to the amino acid-polyamine-organocation (APC) superfamily. Amino acid transporter (AAT) (TC 2.A.3.1) family.

The protein localises to the cell inner membrane. It carries out the reaction L-phenylalanine(in) + H(+)(in) = L-phenylalanine(out) + H(+)(out). The catalysed reaction is L-tryptophan(in) + H(+)(in) = L-tryptophan(out) + H(+)(out). It catalyses the reaction L-tyrosine(in) + H(+)(in) = L-tyrosine(out) + H(+)(out). Its activity is regulated as follows. Strong, mutual inhibition of uptake by tyrosine, phenylalanine, and tryptophan. Transport is also inhibited by the aromatic analogs p-fluorophenylalanine, beta-2-thienylalanine and 5-methyltryptophan. Permease that is involved in the active transport across the cytoplasmic membrane of all three aromatic amino acids, phenylalanine, tyrosine and tryptophan. This chain is Aromatic amino acid transport protein AroP, found in Escherichia coli (strain K12).